The sequence spans 125 residues: Small ribosomal subunit protein uS12 (125 aa).

A disordered region spans residues 1–30 (MPTISQLVRKPRAAKPLKSKVPALGNSPQK). Residues 9–18 (RKPRAAKPLK) show a composition bias toward basic residues. Asp89 is modified (3-methylthioaspartic acid). A disordered region spans residues 103–125 (DTAGVKDRKQGRSKYGAKKPKSA). Basic residues predominate over residues 113 to 125 (GRSKYGAKKPKSA).

Belongs to the universal ribosomal protein uS12 family. As to quaternary structure, part of the 30S ribosomal subunit. Contacts proteins S8 and S17. May interact with IF1 in the 30S initiation complex.

With S4 and S5 plays an important role in translational accuracy. In terms of biological role, interacts with and stabilizes bases of the 16S rRNA that are involved in tRNA selection in the A site and with the mRNA backbone. Located at the interface of the 30S and 50S subunits, it traverses the body of the 30S subunit contacting proteins on the other side and probably holding the rRNA structure together. The combined cluster of proteins S8, S12 and S17 appears to hold together the shoulder and platform of the 30S subunit. The sequence is that of Small ribosomal subunit protein uS12 from Nitrosospira multiformis (strain ATCC 25196 / NCIMB 11849 / C 71).